The following is a 580-amino-acid chain: MASSSWAFFKVFNPQIAPKSISHIGQSDLMQLTHKKQLPTFQRRGIAEDSLLPSSTTPIKPMHVETKHTRTMGDIFVQHSQKLELFRNVLRNAAELDALEGLNMIDAVQRLGIDYHFQREIDEILHKQMGIVSACDDLYEVALRFRLLRQHGYFVPEDVFNNFKDSKGTFKQVLGEDIKGLMSLYEASQLGTEGEDTLVEAEKFSGHLLKTSLSHLDRHRARIVGNTLRNPHRKSLASFMARNFFVTSQATNSWLNLLKEVAKTDFNMVRSVHQKEIVQISKWWKELGLVKELKFARDQPLKWYTWSMAGLTDPKLSEERVELTKPISFVYLIDDIFDVYGTLDDLILFTEAVNRWEITAIDHLPDYMKICFKALYDMTNEFSCKVYQKHGWNPLRSLKISWASLCNAFLVEAKWFASGQLPKSEEYLKNGIVSSGVNVGLVHMFFLLGQNITRKSVELLNETPAMISSSAAILRLWDDLGSAKDENQDGNDGSYVRCYLEEHEGCSIEEAREKTINMISDEWKKLNRELLSPNPFPATFTSASLNLARMIPLMYSYDGNQSLPSLKEYMKLMLYETVSM.

The N-terminal 31 residues, 1–31 (MASSSWAFFKVFNPQIAPKSISHIGQSDLMQ), are a transit peptide targeting the chloroplast. 5 residues coordinate Mg(2+): aspartate 334, aspartate 338, aspartate 478, serine 482, and glutamate 486. A DDXXD motif motif is present at residues 334–338 (DDIFD).

The protein belongs to the terpene synthase family. Tpsg subfamily. Mg(2+) is required as a cofactor. It depends on Mn(2+) as a cofactor.

The protein resides in the plastid. It localises to the chloroplast. It carries out the reaction (2E,6E)-farnesyl diphosphate + H2O = (3S,6E)-nerolidol + diphosphate. Its pathway is secondary metabolite biosynthesis; terpenoid biosynthesis. Functionally, involved in monoterpene (C10) and sesquiterpene (C15) biosynthesis. Converts geranyl diphosphate (GPP) into S-linalool and farnesyl diphosphate (FPP) into (3S)-E-nerolidol. Probably not expressed in wild strawberry species. In Fragaria vesca (Woodland strawberry), this protein is (3S,6E)-nerolidol synthase 1, chloroplastic.